Reading from the N-terminus, the 395-residue chain is General transcription factor IIH subunit 2-like protein (395 aa).

Residues 60-236 (HLYVVVDGSR…HYKELLTHHL (177 aa)) enclose the VWFA domain. Residue Y95 is modified to Phosphotyrosine. A C4-type zinc finger spans residues 291 to 308 (CPQCRAKYCELPVECKIC).

The protein belongs to the GTF2H2 family.

The protein localises to the nucleus. Component of the core-TFIIH basal transcription factor involved in nucleotide excision repair (NER) of DNA and, when complexed to CAK, in RNA transcription by RNA polymerase II. This chain is General transcription factor IIH subunit 2-like protein (GTF2H2C), found in Homo sapiens (Human).